A 115-amino-acid chain; its full sequence is Hydrogenase maturation factor HypA (115 aa).

A Ni(2+)-binding site is contributed by H2. Positions 73, 76, 89, and 92 each coordinate Zn(2+).

This sequence belongs to the HypA/HybF family.

Functionally, involved in the maturation of [NiFe] hydrogenases. Required for nickel insertion into the metal center of the hydrogenase. The sequence is that of Hydrogenase maturation factor HypA from Aquifex aeolicus (strain VF5).